Consider the following 198-residue polypeptide: MSRFTGSTWKVSRRLGYSISETGKELKKRPYAPGQHGQRRSKLSNYGIQLQEKQKVRFVYGVSEKQFKKTFLESAKMQGKQGENFLKLLESRLDNVVYRLGFTKTRAQARQLVNHGHILVDGKKVDIPSYRLAPGQTVQLKEKSKNLTIVKEALEAQFAHVDYVALDANGVGTFSRLPERNEFLFDINEQLIVEFYNR.

The disordered stretch occupies residues 26-45 (LKKRPYAPGQHGQRRSKLSN). The region spanning 91–154 (SRLDNVVYRL…KNLTIVKEAL (64 aa)) is the S4 RNA-binding domain.

It belongs to the universal ribosomal protein uS4 family. Part of the 30S ribosomal subunit. Contacts protein S5. The interaction surface between S4 and S5 is involved in control of translational fidelity.

Functionally, one of the primary rRNA binding proteins, it binds directly to 16S rRNA where it nucleates assembly of the body of the 30S subunit. In terms of biological role, with S5 and S12 plays an important role in translational accuracy. The sequence is that of Small ribosomal subunit protein uS4 from Acholeplasma laidlawii (strain PG-8A).